A 258-amino-acid polypeptide reads, in one-letter code: Snake venom serine protease catroxase-2 (258 aa).

An N-terminal signal peptide occupies residues 1-18 (MVLIRVLANLLILQLSYA). Positions 19-24 (QKSSEL) are excised as a propeptide. In terms of domain architecture, Peptidase S1 spans 25–249 (VVGGDECNIN…YNDWIQSIIA (225 aa)). 6 disulfides stabilise this stretch: cysteine 31–cysteine 163, cysteine 50–cysteine 66, cysteine 98–cysteine 256, cysteine 142–cysteine 210, cysteine 174–cysteine 189, and cysteine 200–cysteine 225. Asparagine 44 carries N-linked (GlcNAc...) asparagine glycosylation. Active-site charge relay system residues include histidine 65 and aspartate 110. Serine 204 serves as the catalytic Charge relay system.

The protein belongs to the peptidase S1 family. Snake venom subfamily. Monomer. Expressed by the venom gland.

It localises to the secreted. In terms of biological role, snake venom serine protease that may act in the hemostasis system of the prey. This chain is Snake venom serine protease catroxase-2, found in Crotalus atrox (Western diamondback rattlesnake).